The primary structure comprises 657 residues: Translation factor GUF1, mitochondrial (657 aa).

The transit peptide at 1 to 39 (MRGCLQSVKWLTSAVRQSQSLTSSTRFPRRLFNTSTLHY) directs the protein to the mitochondrion. The region spanning 59-239 (ERFRNFCIVA…TVIEQVPAPV (181 aa)) is the tr-type G domain. GTP is bound by residues 68–75 (AHVDHGKS), 132–136 (DTPGH), and 186–189 (NKVD).

This sequence belongs to the TRAFAC class translation factor GTPase superfamily. Classic translation factor GTPase family. LepA subfamily.

The protein localises to the mitochondrion inner membrane. It carries out the reaction GTP + H2O = GDP + phosphate + H(+). Promotes mitochondrial protein synthesis. May act as a fidelity factor of the translation reaction, by catalyzing a one-codon backward translocation of tRNAs on improperly translocated ribosomes. Binds to mitochondrial ribosomes in a GTP-dependent manner. The polypeptide is Translation factor GUF1, mitochondrial (Blastomyces gilchristii (strain SLH14081) (Blastomyces dermatitidis)).